A 515-amino-acid chain; its full sequence is MVAKPRSRCCCCSVFIGVIILIAIIIAVIFTIRHRSNHSDDDGSNVKNYANALKIAMQFFDIQKSGKLENNEISWRGDSGLKDGSEASIDLSKGLYDAGDHMKFGFPMAFTATVLSWSILEYGDQMASLNLLDHAKDSLKWTTDFLINAHPSPNVLYIQVGDPVTDHKCWDRPETMTRKRTLTKIDTKTPGTEVAAETAAAMAAASLVFKESDTKYSSTLLKHAKQLFDFADNNRGSYSVNIPEVQSYYNSTGYGDELLWAASWLYHATEDQTYLDFVSENGEEFGNFGSPSWFSWDNKLPGTHILLSRLTFFKKGLSGSKGLQGFKETAEAVMCGLIPSSPTATSSRTDGGLIWVSEWNALQHPVSSAFLATLYSDYMLTSGVKELSCSDQSFKPSDLRKFARSQADYMLGKNPEKMSYLVGYGEKYPEFVHHRGASIPADATTGCKDGFKWLNSDEPNPNVAYGALVGGPFLNDTFIDARNNSMQNEPSTYNSALVVGLLSSLVTTSSSVESF.

The N-terminal stretch at 1 to 31 (MVAKPRSRCCCCSVFIGVIILIAIIIAVIFT) is a signal peptide. N-linked (GlcNAc...) asparagine glycosylation occurs at asparagine 37. Aspartate 100 (nucleophile) is an active-site residue. N-linked (GlcNAc...) asparagine glycosylation occurs at asparagine 250. Histidine 433 is a catalytic residue. N-linked (GlcNAc...) asparagine glycosylation is present at asparagine 475. Aspartate 480 is a catalytic residue. Asparagine 483 is a glycosylation site (N-linked (GlcNAc...) asparagine). Residue glutamate 489 is part of the active site.

It belongs to the glycosyl hydrolase 9 (cellulase E) family.

It is found in the secreted. It catalyses the reaction Endohydrolysis of (1-&gt;4)-beta-D-glucosidic linkages in cellulose, lichenin and cereal beta-D-glucans.. This Arabidopsis thaliana (Mouse-ear cress) protein is Endoglucanase 2.